The sequence spans 219 residues: Large ribosomal subunit protein uL3 (219 aa).

This sequence belongs to the universal ribosomal protein uL3 family. Part of the 50S ribosomal subunit. Forms a cluster with proteins L14 and L19.

One of the primary rRNA binding proteins, it binds directly near the 3'-end of the 23S rRNA, where it nucleates assembly of the 50S subunit. This chain is Large ribosomal subunit protein uL3, found in Chlamydia pneumoniae (Chlamydophila pneumoniae).